A 2145-amino-acid polypeptide reads, in one-letter code: Mediator of RNA polymerase II transcription subunit 12-like protein (2145 aa).

A disordered region spans residues 1-30 (MAAFGLLSYEQRPLKRPRLGPPDVYPQDPK). Thr462 is subject to Phosphothreonine. The span at 1436–1455 (ELEKGQHLGSSSKKERDRQK) shows a compositional bias: basic and acidic residues. Disordered stretches follow at residues 1436-1460 (ELEK…KSMS), 1721-1802 (RSYY…ISSQ), and 2029-2145 (DAVL…PSHF). The segment covering 1768-1777 (TKGRKRKTKS) has biased composition (basic residues). The span at 2052–2069 (RQPQVRQQQRLLQMQQPQ) shows a compositional bias: low complexity. Positions 2070 to 2079 (QPQPQQPPQP) are enriched in pro residues. Residues 2089-2099 (TLGLQAMQPQQ) show a composition bias toward polar residues. Residues 2104–2124 (RQGLQQTQQQQQTAALVRQLQ) are compositionally biased toward low complexity. Positions 2125-2136 (KQLSSNQPQQGV) are enriched in polar residues.

This sequence belongs to the Mediator complex subunit 12 family. In terms of assembly, may be a component of the Mediator complex, which is known to be composed of MED1, MED4, MED6, MED7, MED8, MED9, MED10, MED11, MED12, MED13, MED13L, MED14, MED15, MED16, MED17, MED18, MED19, MED20, MED21, MED22, MED23, MED24, MED25, MED26, MED27, MED29, MED30, MED31, CCNC, CDK8 and CDC2L6/CDK11. The MED12, MED13, CCNC and CDK8 subunits form a distinct module termed the CDK8 module. Mediator containing the CDK8 module is less active than Mediator lacking this module in supporting transcriptional activation. Individual preparations of the Mediator complex lacking one or more distinct subunits have been variously termed ARC, CRSP, DRIP, PC2, SMCC and TRAP.

Its subcellular location is the nucleus. Its function is as follows. May be a component of the Mediator complex, a coactivator involved in the regulated transcription of nearly all RNA polymerase II-dependent genes. Mediator functions as a bridge to convey information from gene-specific regulatory proteins to the basal RNA polymerase II transcription machinery. Mediator is recruited to promoters by direct interactions with regulatory proteins and serves as a scaffold for the assembly of a functional preinitiation complex with RNA polymerase II and the general transcription factors. This chain is Mediator of RNA polymerase II transcription subunit 12-like protein (MED12L), found in Homo sapiens (Human).